The primary structure comprises 366 residues: Probable quinol oxidase subunit 2 (366 aa).

Positions 1-19 (MSKFKSLLLLFGTLILLSG) are cleaved as a signal peptide. Residue C20 is the site of N-palmitoyl cysteine attachment. C20 carries the S-diacylglycerol cysteine lipid modification. A run of 2 helical transmembrane segments spans residues 38 to 58 (FLIL…LGMF) and 80 to 100 (AIIE…LAIP). The disordered stretch occupies residues 330–366 (EPYNNEFKKDESKNAKEMKKISKDAQDQDNDDHGGGH). Basic and acidic residues predominate over residues 335–366 (EFKKDESKNAKEMKKISKDAQDQDNDDHGGGH).

This sequence belongs to the cytochrome c oxidase subunit 2 family.

It localises to the cell membrane. It carries out the reaction 2 a quinol + O2 = 2 a quinone + 2 H2O. Its function is as follows. Catalyzes quinol oxidation with the concomitant reduction of oxygen to water. Subunit II transfers the electrons from a quinol to the binuclear center of the catalytic subunit I. This Staphylococcus aureus (strain bovine RF122 / ET3-1) protein is Probable quinol oxidase subunit 2 (qoxA).